The sequence spans 156 residues: Small ribosomal subunit protein uS7 (156 aa).

The protein belongs to the universal ribosomal protein uS7 family. In terms of assembly, part of the 30S ribosomal subunit. Contacts proteins S9 and S11.

In terms of biological role, one of the primary rRNA binding proteins, it binds directly to 16S rRNA where it nucleates assembly of the head domain of the 30S subunit. Is located at the subunit interface close to the decoding center, probably blocks exit of the E-site tRNA. The protein is Small ribosomal subunit protein uS7 of Nitrosomonas europaea (strain ATCC 19718 / CIP 103999 / KCTC 2705 / NBRC 14298).